A 345-amino-acid polypeptide reads, in one-letter code: KH domain-containing, RNA-binding, signal transduction-associated protein 2 (345 aa).

The region spanning 65-131 is the KH domain; the sequence is LIPVKQYPKF…AKHAHLSDEL (67 aa). Disordered regions lie at residues 178-224 and 321-345; these read LNGS…TRGA and SRST…YGRY. Residues 336–345 are compositionally biased toward basic and acidic residues; sequence GYREHPYGRY.

It belongs to the KHDRBS family.

It is found in the nucleus. Its function is as follows. RNA-binding protein that plays a role in the regulation of alternative splicing. This Xenopus tropicalis (Western clawed frog) protein is KH domain-containing, RNA-binding, signal transduction-associated protein 2 (khdrbs2).